The chain runs to 255 residues: MFKVRVIPCLDVKDGRVVKGVNFVDLRDAGDPVEAAIAYDAAGADELCFLDITATHENRGIMLDVVRRTAEACFMPVTVGGGVRTVDDIKTLLRSGADKVSINSAAVARREFVKEAAEKFGDQCIVVAIDAKRVPGRDRWEIFTHGGRKGTGIDAIEFAQEVVSLGAGEILLTSMDRDGTRSGFDLPLTRAIADSIQVPVIASGGVGNLDHLVDGIRDGHATAVLAASIFHFGEYTIRQAKDHMVRCGLPMRLDP.

Active-site residues include D11 and D130.

Belongs to the HisA/HisF family. In terms of assembly, heterodimer of HisH and HisF.

The protein localises to the cytoplasm. The enzyme catalyses 5-[(5-phospho-1-deoxy-D-ribulos-1-ylimino)methylamino]-1-(5-phospho-beta-D-ribosyl)imidazole-4-carboxamide + L-glutamine = D-erythro-1-(imidazol-4-yl)glycerol 3-phosphate + 5-amino-1-(5-phospho-beta-D-ribosyl)imidazole-4-carboxamide + L-glutamate + H(+). It functions in the pathway amino-acid biosynthesis; L-histidine biosynthesis; L-histidine from 5-phospho-alpha-D-ribose 1-diphosphate: step 5/9. In terms of biological role, IGPS catalyzes the conversion of PRFAR and glutamine to IGP, AICAR and glutamate. The HisF subunit catalyzes the cyclization activity that produces IGP and AICAR from PRFAR using the ammonia provided by the HisH subunit. The protein is Imidazole glycerol phosphate synthase subunit HisF of Rhodopseudomonas palustris (strain HaA2).